The chain runs to 1178 residues: Tricalbin-2 (1178 aa).

Residues 1-17 (MSPNSSKTRTDQISSMP) are compositionally biased toward polar residues. A disordered region spans residues 1-27 (MSPNSSKTRTDQISSMPGINEATKVES). The Cytoplasmic portion of the chain corresponds to 1–98 (MSPNSSKTRT…NLLPDKFYGD (98 aa)). Residues 99 to 119 (WYHEVAILIIAGLCSFVLGYF) form a helical membrane-spanning segment. Residue K120 is a topological domain, extracellular. A helical membrane pass occupies residues 121-141 (FSLASVLIVMLTTGMLYRTSS). Over 142 to 1178 (KKYRESLRDL…TGDKKSEEKQ (1037 aa)) the chain is Cytoplasmic. The 204-residue stretch at 164-367 (DYESVEWLNT…PPFSLQLNIP (204 aa)) folds into the SMP-LTD domain. C2 domains lie at 358-481 (PPFS…EKVH), 504-628 (PKKL…LKVT), and 632-749 (RPVD…DKYT). Residues 784–821 (LSLEEAKEVDEINEKKDKLEKQKSTLDDKNISKEEKER) are a coiled coil. The C2 4 domain occupies 962–1086 (QVSWFPVTAT…DPESDTTFNI (125 aa)). S991 carries the phosphoserine modification.

It belongs to the tricalbin family. In terms of assembly, interacts with TCB1 and TCB3 via its C-terminal domain.

The protein resides in the cell membrane. Its subcellular location is the endoplasmic reticulum membrane. Functionally, may play a role in membrane trafficking. This chain is Tricalbin-2 (TCB2), found in Saccharomyces cerevisiae (strain ATCC 204508 / S288c) (Baker's yeast).